The chain runs to 720 residues: Replication restart protein PriA (720 aa).

One can recognise a Helicase ATP-binding domain in the interval 200-366 (ILMKNCFTSW…LHKKCFYIKF (167 aa)). 213–220 (KNNFYLKV) contributes to the ATP binding site. The DEAH box signature appears at 309–312 (NQEH). 8 residues coordinate Zn(2+): cysteine 425, cysteine 428, cysteine 434, cysteine 437, cysteine 452, cysteine 455, cysteine 465, and cysteine 468.

It belongs to the helicase family. PriA subfamily. As to quaternary structure, component of the replication restart primosome. The cofactor is Zn(2+).

The catalysed reaction is Couples ATP hydrolysis with the unwinding of duplex DNA by translocating in the 3'-5' direction.. The enzyme catalyses ATP + H2O = ADP + phosphate + H(+). Initiates the restart of stalled replication forks, which reloads the replicative helicase on sites other than the origin of replication. Recognizes and binds to abandoned replication forks and remodels them to uncover a helicase loading site. Promotes assembly of the primosome at these replication forks. The sequence is that of Replication restart protein PriA from Buchnera aphidicola subsp. Schizaphis graminum (strain Sg).